We begin with the raw amino-acid sequence, 186 residues long: Transcription factor pgmR (186 aa).

The segment at residues 19–46 is a DNA-binding region (zn(2)-C6 fungal-type); sequence CDECGAAKLKCDRGHPSCGRCISLGLKC. The disordered stretch occupies residues 52-98; that stretch reads RKAGKPRRDAQSATRPPPTPGDSGPPLDYNSFGPTSPPSSVGDGATL.

It localises to the nucleus. Its function is as follows. Transcription factor that specifically regulates the expression of the pgm gene cluster that mediates the biosynthesis of cryptic naphthoquinones derived pigments responsible for the coloration of the fruiting bodies. The protein is Transcription factor pgmR of Aspergillus terreus (strain NIH 2624 / FGSC A1156).